The chain runs to 175 residues: Ribosome maturation factor RimM (175 aa).

Residues 97-170 (NGQYYWTDVL…YLYVDWQMAW (74 aa)) enclose the PRC barrel domain.

The protein belongs to the RimM family. In terms of assembly, binds ribosomal protein uS19.

The protein resides in the cytoplasm. An accessory protein needed during the final step in the assembly of 30S ribosomal subunit, possibly for assembly of the head region. Essential for efficient processing of 16S rRNA. May be needed both before and after RbfA during the maturation of 16S rRNA. It has affinity for free ribosomal 30S subunits but not for 70S ribosomes. This is Ribosome maturation factor RimM from Dichelobacter nodosus (strain VCS1703A).